Here is a 364-residue protein sequence, read N- to C-terminus: Aminomethyltransferase (364 aa).

This sequence belongs to the GcvT family. The glycine cleavage system is composed of four proteins: P, T, L and H.

The enzyme catalyses N(6)-[(R)-S(8)-aminomethyldihydrolipoyl]-L-lysyl-[protein] + (6S)-5,6,7,8-tetrahydrofolate = N(6)-[(R)-dihydrolipoyl]-L-lysyl-[protein] + (6R)-5,10-methylene-5,6,7,8-tetrahydrofolate + NH4(+). In terms of biological role, the glycine cleavage system catalyzes the degradation of glycine. In Klebsiella pneumoniae subsp. pneumoniae (strain ATCC 700721 / MGH 78578), this protein is Aminomethyltransferase.